A 326-amino-acid polypeptide reads, in one-letter code: Beta-ketoacyl-[acyl-carrier-protein] synthase III (326 aa).

Catalysis depends on residues Cys112 and His251. The ACP-binding stretch occupies residues 252 to 256 (QANSR). Asn281 is a catalytic residue.

Belongs to the thiolase-like superfamily. FabH family. As to quaternary structure, homodimer.

It localises to the cytoplasm. It catalyses the reaction malonyl-[ACP] + acetyl-CoA + H(+) = 3-oxobutanoyl-[ACP] + CO2 + CoA. It functions in the pathway lipid metabolism; fatty acid biosynthesis. In terms of biological role, catalyzes the condensation reaction of fatty acid synthesis by the addition to an acyl acceptor of two carbons from malonyl-ACP. Catalyzes the first condensation reaction which initiates fatty acid synthesis and may therefore play a role in governing the total rate of fatty acid production. Possesses both acetoacetyl-ACP synthase and acetyl transacylase activities. Its substrate specificity determines the biosynthesis of branched-chain and/or straight-chain of fatty acids. The chain is Beta-ketoacyl-[acyl-carrier-protein] synthase III from Clostridium botulinum (strain Langeland / NCTC 10281 / Type F).